The following is a 233-amino-acid chain: H-2 class II histocompatibility antigen, A-R alpha chain (233 aa).

Positions 1 to 88 (EDDIEADHVG…KRSNFTPAAN (88 aa)) are alpha-1. Topologically, residues 1–195 (EDDIEADHVG…IPAPMSELTE (195 aa)) are extracellular. Positions 89-182 (EAPQATVFPK…GLEEPVLKHW (94 aa)) are alpha-2. The 93-residue stretch at 91-183 (PQATVFPKSP…LEEPVLKHWE (93 aa)) folds into the Ig-like C1-type domain. Cys111 and Cys167 are oxidised to a cystine. A glycan (N-linked (GlcNAc...) asparagine) is linked at Asn122. Positions 183–195 (EPEIPAPMSELTE) are connecting peptide. Residues 196-221 (TVVCALGLSVGLVGIVVGTIFIIQGL) traverse the membrane as a helical segment. At 222-233 (RSGGTSRHPGPL) the chain is on the cytoplasmic side.

It belongs to the MHC class II family.

The protein localises to the membrane. This is H-2 class II histocompatibility antigen, A-R alpha chain (H2-Aa) from Mus musculus (Mouse).